Consider the following 124-residue polypeptide: Large ribosomal subunit protein bL12 (124 aa).

The protein belongs to the bacterial ribosomal protein bL12 family. As to quaternary structure, homodimer. Part of the ribosomal stalk of the 50S ribosomal subunit. Forms a multimeric L10(L12)X complex, where L10 forms an elongated spine to which 2 to 4 L12 dimers bind in a sequential fashion. Binds GTP-bound translation factors.

Forms part of the ribosomal stalk which helps the ribosome interact with GTP-bound translation factors. Is thus essential for accurate translation. This Chlorobium chlorochromatii (strain CaD3) protein is Large ribosomal subunit protein bL12.